The chain runs to 478 residues: Protein nucleotidyltransferase YdiU (478 aa).

Gly84, Gly86, Arg87, Lys107, Asp119, Gly120, Arg170, and Arg177 together coordinate ATP. Asp246 (proton acceptor) is an active-site residue. Asn247 and Asp256 together coordinate Mg(2+). Asp256 contacts ATP.

The protein belongs to the SELO family. The cofactor is Mg(2+). Mn(2+) is required as a cofactor.

The catalysed reaction is L-seryl-[protein] + ATP = 3-O-(5'-adenylyl)-L-seryl-[protein] + diphosphate. It catalyses the reaction L-threonyl-[protein] + ATP = 3-O-(5'-adenylyl)-L-threonyl-[protein] + diphosphate. The enzyme catalyses L-tyrosyl-[protein] + ATP = O-(5'-adenylyl)-L-tyrosyl-[protein] + diphosphate. It carries out the reaction L-histidyl-[protein] + UTP = N(tele)-(5'-uridylyl)-L-histidyl-[protein] + diphosphate. The catalysed reaction is L-seryl-[protein] + UTP = O-(5'-uridylyl)-L-seryl-[protein] + diphosphate. It catalyses the reaction L-tyrosyl-[protein] + UTP = O-(5'-uridylyl)-L-tyrosyl-[protein] + diphosphate. Nucleotidyltransferase involved in the post-translational modification of proteins. It can catalyze the addition of adenosine monophosphate (AMP) or uridine monophosphate (UMP) to a protein, resulting in modifications known as AMPylation and UMPylation. The polypeptide is Protein nucleotidyltransferase YdiU (Shigella boydii serotype 4 (strain Sb227)).